Reading from the N-terminus, the 217-residue chain is Cytidylate kinase (217 aa).

Gly9–Thr17 is a binding site for ATP.

This sequence belongs to the cytidylate kinase family. Type 1 subfamily.

It localises to the cytoplasm. The catalysed reaction is CMP + ATP = CDP + ADP. It catalyses the reaction dCMP + ATP = dCDP + ADP. This chain is Cytidylate kinase, found in Thermosipho melanesiensis (strain DSM 12029 / CIP 104789 / BI429).